A 339-amino-acid polypeptide reads, in one-letter code: Phosphoribosylformylglycinamidine cyclo-ligase (339 aa).

Belongs to the AIR synthase family.

The protein resides in the cytoplasm. It carries out the reaction 2-formamido-N(1)-(5-O-phospho-beta-D-ribosyl)acetamidine + ATP = 5-amino-1-(5-phospho-beta-D-ribosyl)imidazole + ADP + phosphate + H(+). It participates in purine metabolism; IMP biosynthesis via de novo pathway; 5-amino-1-(5-phospho-D-ribosyl)imidazole from N(2)-formyl-N(1)-(5-phospho-D-ribosyl)glycinamide: step 2/2. The polypeptide is Phosphoribosylformylglycinamidine cyclo-ligase (Fusobacterium nucleatum subsp. nucleatum (strain ATCC 25586 / DSM 15643 / BCRC 10681 / CIP 101130 / JCM 8532 / KCTC 2640 / LMG 13131 / VPI 4355)).